Reading from the N-terminus, the 649-residue chain is MSAPTLDVESPLAASTSSLRAMNMVSSHTTVAKDEIYDLLGIGFGPAHLALSISLRESSEANETNFKAHFLEKRGHFAWHPALLLPGSQLQVSPLKDLVTLRDPASTYSFYNYLHSHGRLARYINKEQGVPSRREWTSYLAWAARRMNQAVSYGQDVISIEPLALASASPDAKQDTVAVRPASAQEADSLCLYQVRIRDESTGHIVNRYARNLSVAVGGVPKLPPAFQAAWDEQQRAPHSIPRLVHSGFYIPSMLKLEPELHKAASLRHPDAAAQLDDSSRLRLAVIGAGQSSTEMFMNLHSRFPSAIVTMIFRASALVPSDDTGFVNSAAFDPERTDEFWQASETQRRKWLQEFKRTNYSVVRTDLLNELHDAMYDKYEVQLPEELQDPTEKQAGRMEMRRCTEVVEVTPLDDGIQLTMRDNLRNAKLETIRFDAVFLGTGFIRSPSKMRFLEQLKPFYPALDAEWMSRDTIAEEDEVSKSIDVEDEEVIERRREMLRGITRDYRLVPASAMQSDAVRSGKSSPGSGSDASSTSSQQTLASENSTENLPEASLYVLGGNEATHGLSDSLLSIVAHRAGELTTSLLQRLPRTRRGTASSAATQPAASTVASAAKTSPTVSVTQTKARQAAQVVNDKLAALSGLHLDATS.

FAD contacts are provided by residues 72–80 (EKRGHFAWH) and Gln-91. Lys-96 lines the substrate pocket. Val-157 lines the FAD pocket. Residues 289 to 292 (AGQS) and Arg-314 each bind NADP(+). Substrate contacts are provided by residues 328–331 (NSAA) and Asn-359. Residue 359 to 361 (NYS) participates in NADP(+) binding. A disordered region spans residues 512-547 (AMQSDAVRSGKSSPGSGSDASSTSSQQTLASENSTE). Residues 520 to 536 (SGKSSPGSGSDASSTSS) show a composition bias toward low complexity. The segment covering 537 to 547 (QQTLASENSTE) has biased composition (polar residues). 569–571 (SLL) is an FAD binding site. Ser-572 serves as a coordination point for substrate. Residues 585-611 (LLQRLPRTRRGTASSAATQPAASTVAS) form a disordered region. Residues 596-611 (TASSAATQPAASTVAS) show a composition bias toward low complexity.

It belongs to the lysine N(6)-hydroxylase/L-ornithine N(5)-oxygenase family. Homotetramer. Requires FAD as cofactor.

The catalysed reaction is L-ornithine + NADPH + O2 = N(5)-hydroxy-L-ornithine + NADP(+) + H2O. It carries out the reaction L-ornithine + NADH + O2 = N(5)-hydroxy-L-ornithine + NAD(+) + H2O. It participates in siderophore biosynthesis; ferrichrome biosynthesis. Its function is as follows. Catalyzes the conversion of L-ornithine to N(5)-hydroxyornithine, the first step in the biosynthesis of all hydroxamate-containing siderophores, such as ferrichrome. The polypeptide is L-ornithine N(5)-monooxygenase (SID1) (Mycosarcoma maydis (Corn smut fungus)).